A 447-amino-acid polypeptide reads, in one-letter code: Probable glycine dehydrogenase (decarboxylating) subunit 1 (447 aa).

It belongs to the GcvP family. N-terminal subunit subfamily. In terms of assembly, the glycine cleavage system is composed of four proteins: P, T, L and H. In this organism, the P 'protein' is a heterodimer of two subunits.

The catalysed reaction is N(6)-[(R)-lipoyl]-L-lysyl-[glycine-cleavage complex H protein] + glycine + H(+) = N(6)-[(R)-S(8)-aminomethyldihydrolipoyl]-L-lysyl-[glycine-cleavage complex H protein] + CO2. Its function is as follows. The glycine cleavage system catalyzes the degradation of glycine. The P protein binds the alpha-amino group of glycine through its pyridoxal phosphate cofactor; CO(2) is released and the remaining methylamine moiety is then transferred to the lipoamide cofactor of the H protein. The sequence is that of Probable glycine dehydrogenase (decarboxylating) subunit 1 from Bacillus cereus (strain AH187).